The sequence spans 138 residues: ATP synthase epsilon chain (138 aa).

Belongs to the ATPase epsilon chain family. As to quaternary structure, F-type ATPases have 2 components, CF(1) - the catalytic core - and CF(0) - the membrane proton channel. CF(1) has five subunits: alpha(3), beta(3), gamma(1), delta(1), epsilon(1). CF(0) has three main subunits: a, b and c.

The protein localises to the cell inner membrane. Its function is as follows. Produces ATP from ADP in the presence of a proton gradient across the membrane. This chain is ATP synthase epsilon chain, found in Citrifermentans bemidjiense (strain ATCC BAA-1014 / DSM 16622 / JCM 12645 / Bem) (Geobacter bemidjiensis).